A 153-amino-acid polypeptide reads, in one-letter code: Insulin-like growth factor 1 (153 aa).

Positions 49–77 (GPETLCGAELVDALQFVCGDRGFYFNKPT) are b. 3 cysteine pairs are disulfide-bonded: C54-C96, C66-C109, and C95-C100. The interval 78–89 (GYGSSSRRAPQT) is c. The segment at 90 to 110 (GIVDECCFRSCDLRRLEMYCA) is a. The d stretch occupies residues 111–118 (PLKPAKSA). Residues 119-153 (RSVRAQRHTDMPKAQKEVHLKNASRGSAGNKNYRM) constitute a propeptide, e peptide. The tract at residues 120–153 (SVRAQRHTDMPKAQKEVHLKNASRGSAGNKNYRM) is disordered. The span at 125 to 138 (RHTDMPKAQKEVHL) shows a compositional bias: basic and acidic residues. A compositionally biased stretch (polar residues) spans 142–153 (SRGSAGNKNYRM).

The protein belongs to the insulin family. Forms a ternary complex with IGFR1 and ITGAV:ITGB3. Forms a ternary complex with IGFR1 and ITGA6:ITGB4. Forms a ternary complex with IGFBP3 and ALS.

Its subcellular location is the secreted. The insulin-like growth factors, isolated from plasma, are structurally and functionally related to insulin but have a much higher growth-promoting activity. May be a physiological regulator of [1-14C]-2-deoxy-D-glucose (2DG) transport and glycogen synthesis in osteoblasts. Stimulates glucose transport in bone-derived osteoblastic (PyMS) cells and is effective at much lower concentrations than insulin, not only regarding glycogen and DNA synthesis but also with regard to enhancing glucose uptake. May play a role in synapse maturation. Ca(2+)-dependent exocytosis of IGF1 is required for sensory perception of smell in the olfactory bulb. Acts as a ligand for IGF1R. Binds to the alpha subunit of IGF1R, leading to the activation of the intrinsic tyrosine kinase activity which autophosphorylates tyrosine residues in the beta subunit thus initiating a cascade of down-stream signaling events leading to activation of the PI3K-AKT/PKB and the Ras-MAPK pathways. Binds to integrins ITGAV:ITGB3 and ITGA6:ITGB4. Its binding to integrins and subsequent ternary complex formation with integrins and IGFR1 are essential for IGF1 signaling. Induces the phosphorylation and activation of IGFR1, MAPK3/ERK1, MAPK1/ERK2 and AKT1. As part of the MAPK/ERK signaling pathway, acts as a negative regulator of apoptosis in cardiomyocytes via promotion of STUB1/CHIP-mediated ubiquitination and degradation of ICER-type isoforms of CREM. This Rhinopithecus roxellana (Golden snub-nosed monkey) protein is Insulin-like growth factor 1.